The following is a 525-amino-acid chain: Mitogen-activated protein kinase kinase 5 (525 aa).

The Protein kinase domain occupies 59–317; that stretch reads ETEGGFLGKG…CTELLRHPFI (259 aa). Residues 65–73 and K88 contribute to the ATP site; that span reads LGKGSSGSV. D178 functions as the Proton acceptor in the catalytic mechanism. Low complexity predominate over residues 358 to 367; the sequence is SALPLASEGG. Disordered stretches follow at residues 358–392 and 438–468; these read SALPLASEGGTPKATSPSPAPVSPLTLSCPLERHD and SASVATDSGEGGGAAGVSAASLDNGQAAQHR.

Belongs to the protein kinase superfamily. STE Ser/Thr protein kinase family. MAP kinase kinase subfamily. Requires Mg(2+) as cofactor.

It catalyses the reaction L-tyrosyl-[protein] + ATP = O-phospho-L-tyrosyl-[protein] + ADP + H(+). The catalysed reaction is L-seryl-[protein] + ATP = O-phospho-L-seryl-[protein] + ADP + H(+). The enzyme catalyses L-threonyl-[protein] + ATP = O-phospho-L-threonyl-[protein] + ADP + H(+). Protein kinase which phosphorylates and activates MPK4 in vitro. In Leishmania mexicana, this protein is Mitogen-activated protein kinase kinase 5.